Reading from the N-terminus, the 236-residue chain is 2-C-methyl-D-erythritol 4-phosphate cytidylyltransferase (236 aa).

Belongs to the IspD/TarI cytidylyltransferase family. IspD subfamily. Homodimer.

The catalysed reaction is 2-C-methyl-D-erythritol 4-phosphate + CTP + H(+) = 4-CDP-2-C-methyl-D-erythritol + diphosphate. It participates in isoprenoid biosynthesis; isopentenyl diphosphate biosynthesis via DXP pathway; isopentenyl diphosphate from 1-deoxy-D-xylulose 5-phosphate: step 2/6. In terms of biological role, catalyzes the formation of 4-diphosphocytidyl-2-C-methyl-D-erythritol from CTP and 2-C-methyl-D-erythritol 4-phosphate (MEP). The polypeptide is 2-C-methyl-D-erythritol 4-phosphate cytidylyltransferase (Escherichia coli O17:K52:H18 (strain UMN026 / ExPEC)).